We begin with the raw amino-acid sequence, 280 residues long: Shikimate dehydrogenase (NADP(+)) (280 aa).

Shikimate contacts are provided by residues 19–21 (SFS) and Thr-66. Residue Lys-70 is the Proton acceptor of the active site. An NADP(+)-binding site is contributed by Glu-82. Positions 91 and 106 each coordinate shikimate. Residues 130–134 (GSGGA) and Leu-222 contribute to the NADP(+) site. Tyr-224 is a binding site for shikimate. Gly-245 serves as a coordination point for NADP(+).

Belongs to the shikimate dehydrogenase family. As to quaternary structure, homodimer.

It carries out the reaction shikimate + NADP(+) = 3-dehydroshikimate + NADPH + H(+). The protein operates within metabolic intermediate biosynthesis; chorismate biosynthesis; chorismate from D-erythrose 4-phosphate and phosphoenolpyruvate: step 4/7. Functionally, involved in the biosynthesis of the chorismate, which leads to the biosynthesis of aromatic amino acids. Catalyzes the reversible NADPH linked reduction of 3-dehydroshikimate (DHSA) to yield shikimate (SA). This is Shikimate dehydrogenase (NADP(+)) from Methanococcus maripaludis (strain C7 / ATCC BAA-1331).